The sequence spans 344 residues: tRNA N6-adenosine threonylcarbamoyltransferase (344 aa).

Residues histidine 110 and histidine 114 each contribute to the Fe cation site. Substrate-binding positions include 133-137 (VMSGA), aspartate 166, glycine 179, and asparagine 278. Residue aspartate 303 coordinates Fe cation.

It belongs to the KAE1 / TsaD family. Fe(2+) is required as a cofactor.

The protein resides in the cytoplasm. The enzyme catalyses L-threonylcarbamoyladenylate + adenosine(37) in tRNA = N(6)-L-threonylcarbamoyladenosine(37) in tRNA + AMP + H(+). Required for the formation of a threonylcarbamoyl group on adenosine at position 37 (t(6)A37) in tRNAs that read codons beginning with adenine. Is involved in the transfer of the threonylcarbamoyl moiety of threonylcarbamoyl-AMP (TC-AMP) to the N6 group of A37, together with TsaE and TsaB. TsaD likely plays a direct catalytic role in this reaction. This chain is tRNA N6-adenosine threonylcarbamoyltransferase, found in Chlamydia felis (strain Fe/C-56) (Chlamydophila felis).